The chain runs to 370 residues: UDP-N-acetylglucosamine--N-acetylmuramyl-(pentapeptide) pyrophosphoryl-undecaprenol N-acetylglucosamine transferase (370 aa).

UDP-N-acetyl-alpha-D-glucosamine is bound by residues 14-16, N125, R168, S196, and Q297; that span reads TGG.

Belongs to the glycosyltransferase 28 family. MurG subfamily.

It is found in the cell inner membrane. It catalyses the reaction di-trans,octa-cis-undecaprenyl diphospho-N-acetyl-alpha-D-muramoyl-L-alanyl-D-glutamyl-meso-2,6-diaminopimeloyl-D-alanyl-D-alanine + UDP-N-acetyl-alpha-D-glucosamine = di-trans,octa-cis-undecaprenyl diphospho-[N-acetyl-alpha-D-glucosaminyl-(1-&gt;4)]-N-acetyl-alpha-D-muramoyl-L-alanyl-D-glutamyl-meso-2,6-diaminopimeloyl-D-alanyl-D-alanine + UDP + H(+). Its pathway is cell wall biogenesis; peptidoglycan biosynthesis. Its function is as follows. Cell wall formation. Catalyzes the transfer of a GlcNAc subunit on undecaprenyl-pyrophosphoryl-MurNAc-pentapeptide (lipid intermediate I) to form undecaprenyl-pyrophosphoryl-MurNAc-(pentapeptide)GlcNAc (lipid intermediate II). This chain is UDP-N-acetylglucosamine--N-acetylmuramyl-(pentapeptide) pyrophosphoryl-undecaprenol N-acetylglucosamine transferase, found in Nitrobacter hamburgensis (strain DSM 10229 / NCIMB 13809 / X14).